The chain runs to 511 residues: Vesicular acetylcholine transporter (511 aa).

Topologically, residues 1–36 (MAVGQAKAAMGKISSAIGERSKRISGAMNEPRRKRK) are cytoplasmic. The helical transmembrane segment at 37–57 (ILLVIVCIAMLLDNMLYMVIV) threads the bilayer. Over 58–108 (PIIPNYLETIRTYKLVYITTPSNGTNGSLLNSTQRAVLERNPNANEDIQIG) the chain is Lumenal, vesicle. N80, N83, and N88 each carry an N-linked (GlcNAc...) asparagine glycan. The chain crosses the membrane as a helical span at residues 109-129 (VLFASKAILQLLSNPFTGTFI). Over 130–135 (DRVGYD) the chain is Cytoplasmic. A helical transmembrane segment spans residues 136–156 (IPLLIGLTIMFFSTITFAFGE). At 157–165 (SYAILFAAR) the chain is on the lumenal, vesicle side. A helical membrane pass occupies residues 166 to 186 (SLQGLGSAFADTSGIAMIADK). The Cytoplasmic segment spans residues 187 to 197 (YTEESERTQAL). A helical membrane pass occupies residues 198 to 218 (GIALAFISFGSLVAPPFGGVL). The Lumenal, vesicle portion of the chain corresponds to 219–225 (YQFAGKW). Residues 226–246 (VPFLVLSFVCLLDGILLLMVV) traverse the membrane as a helical segment. Over 247–267 (TPFASRTRVNTLQGTPIYKLM) the chain is Cytoplasmic. The chain crosses the membrane as a helical span at residues 268 to 288 (IDPYIAVVAGALTTCNIPLAF). Over 289 to 306 (LEPTISNWMKKTMNASEW) the chain is Lumenal, vesicle. N302 carries an N-linked (GlcNAc...) asparagine glycan. Residues 307-327 (QMGITWLPAFFPHILGVYITV) form a helical membrane-spanning segment. Residues 328–337 (KLAAKYPNYQ) are Cytoplasmic-facing. Residues 338–358 (WLYGAVGLVIIGASSCTIPAC) form a helical membrane-spanning segment. The Lumenal, vesicle segment spans residues 359 to 363 (RNFEE). Residues 364–384 (LIIPLCALCFGIALVDTALLP) traverse the membrane as a helical segment. Over 385-400 (TLAFLVDIRYVSVYGS) the chain is Cytoplasmic. A helical membrane pass occupies residues 401–421 (VYAIADISYSVAYALGPIMAG). Residues 422–428 (QIVHDLG) lie on the Lumenal, vesicle side of the membrane. Residues 429 to 449 (FVQLNLGMGLVNILYAPGLLF) traverse the membrane as a helical segment. The Cytoplasmic portion of the chain corresponds to 450-511 (LRNVCQMKPS…VLSDQEGYSE (62 aa)). The tract at residues 485-511 (EAKEPHGTSSGNHSVHAVLSDQEGYSE) is disordered.

It belongs to the major facilitator superfamily. Vesicular transporter family. High expression in the electric lobe of the brain.

The protein resides in the membrane. Involved in acetylcholine transport into synaptic vesicles. This chain is Vesicular acetylcholine transporter, found in Torpedo marmorata (Marbled electric ray).